The chain runs to 238 residues: DNA repair protein RecO (238 aa).

It belongs to the RecO family.

Involved in DNA repair and RecF pathway recombination. This Hahella chejuensis (strain KCTC 2396) protein is DNA repair protein RecO.